The sequence spans 225 residues: Fibronectin type III domain-containing protein 10 (225 aa).

The signal sequence occupies residues 1-19; the sequence is MRAPPLLLLLAACAPPSGA. Topologically, residues 20-181 are extracellular; it reads AVDPTPPGWE…FTAEPAAMQE (162 aa). The region spanning 72-167 is the Fibronectin type-III domain; that stretch reads LASAGGSLRA…ELAAAPPELA (96 aa). N-linked (GlcNAc...) asparagine glycans are attached at residues asparagine 86 and asparagine 109. A helical transmembrane segment spans residues 182 to 202; sequence IVVAMTAVGGSICVMLVVICL. The Cytoplasmic portion of the chain corresponds to 203-225; the sequence is LVAYITENLMHPTFRRPSLRRQP.

The protein resides in the membrane. In Rattus norvegicus (Rat), this protein is Fibronectin type III domain-containing protein 10 (Fndc10).